The chain runs to 110 residues: Parvalbumin alpha (110 aa).

The residue at position 2 (S2) is an N-acetylserine. A phosphoserine mark is found at S2 and S24. 2 consecutive EF-hand domains span residues 39–74 (KSAD…FSPD) and 78–110 (LSAK…VAES). Residues D52, D54, S56, F58, E60, E63, D91, D93, D95, K97, and E102 each contribute to the Ca(2+) site.

In terms of biological role, in muscle, parvalbumin is thought to be involved in relaxation after contraction. It binds two calcium ions. In Homo sapiens (Human), this protein is Parvalbumin alpha (PVALB).